A 487-amino-acid chain; its full sequence is Chromosomal replication initiator protein DnaA (487 aa).

The tract at residues 1–79 is domain I, interacts with DnaA modulators; the sequence is MPNSMWHQCL…QAPRVMMKVG (79 aa). The interval 78 to 138 is disordered; the sequence is VGSAPKPTDP…PAPKAQAERR (61 aa). Positions 79-150 are domain II; the sequence is GSAPKPTDPV…QVEGDIKHQS (72 aa). The segment at 151-367 is domain III, AAA+ region; the sequence is FLNETFTFDT…GALRLVIANA (217 aa). Residues glycine 195, glycine 197, lysine 198, and threonine 199 each contribute to the ATP site. Residues 368–487 are domain IV, binds dsDNA; it reads HFTGSEITPP…YQNFMRLLTT (120 aa).

Belongs to the DnaA family. Oligomerizes as a right-handed, spiral filament on DNA at oriC.

It localises to the cytoplasm. Plays an essential role in the initiation and regulation of chromosomal replication. ATP-DnaA binds to the origin of replication (oriC) to initiate formation of the DNA replication initiation complex once per cell cycle. Binds the DnaA box (a 9 base pair repeat at the origin) and separates the double-stranded (ds)DNA. Forms a right-handed helical filament on oriC DNA; dsDNA binds to the exterior of the filament while single-stranded (ss)DNA is stabiized in the filament's interior. The ATP-DnaA-oriC complex binds and stabilizes one strand of the AT-rich DNA unwinding element (DUE), permitting loading of DNA polymerase. After initiation quickly degrades to an ADP-DnaA complex that is not apt for DNA replication. Binds acidic phospholipids. In Marinobacter nauticus (strain ATCC 700491 / DSM 11845 / VT8) (Marinobacter aquaeolei), this protein is Chromosomal replication initiator protein DnaA.